Here is a 262-residue protein sequence, read N- to C-terminus: Thiazole synthase (262 aa).

Lysine 96 acts as the Schiff-base intermediate with DXP in catalysis. 1-deoxy-D-xylulose 5-phosphate contacts are provided by residues glycine 157, 184–185 (AG), and 206–207 (NT).

Belongs to the ThiG family. In terms of assembly, homotetramer. Forms heterodimers with either ThiH or ThiS.

Its subcellular location is the cytoplasm. It carries out the reaction [ThiS sulfur-carrier protein]-C-terminal-Gly-aminoethanethioate + 2-iminoacetate + 1-deoxy-D-xylulose 5-phosphate = [ThiS sulfur-carrier protein]-C-terminal Gly-Gly + 2-[(2R,5Z)-2-carboxy-4-methylthiazol-5(2H)-ylidene]ethyl phosphate + 2 H2O + H(+). Its pathway is cofactor biosynthesis; thiamine diphosphate biosynthesis. Catalyzes the rearrangement of 1-deoxy-D-xylulose 5-phosphate (DXP) to produce the thiazole phosphate moiety of thiamine. Sulfur is provided by the thiocarboxylate moiety of the carrier protein ThiS. In vitro, sulfur can be provided by H(2)S. This Legionella pneumophila (strain Lens) protein is Thiazole synthase.